Reading from the N-terminus, the 241-residue chain is Small ribosomal subunit protein uS3 (241 aa).

Residues 39-109 (VRNYVNKNLS…PIRINVVEVA (71 aa)) form the KH type-2 domain. The segment at 213 to 241 (ADEQPTNREPQQRRRQQQRRRQQFEDRSE) is disordered.

It belongs to the universal ribosomal protein uS3 family. In terms of assembly, part of the 30S ribosomal subunit. Forms a tight complex with proteins S10 and S14.

Its function is as follows. Binds the lower part of the 30S subunit head. Binds mRNA in the 70S ribosome, positioning it for translation. This is Small ribosomal subunit protein uS3 from Acaryochloris marina (strain MBIC 11017).